The chain runs to 180 residues: MEYKTPFIAKKLGVSPKAVVRIAQQLNLTIEKNKYGHFIFTQDDLDQMLEYHLSQIEKSQNTHPTQKTSSNDVEELKTQVNTIVQNISSHDFEQLTAQLNTITRRLDRMEEQMQDKANDVVTYQLLQHRREMEEMLERIQKLEATLKKEEPIYITPDTKPIYEREKKPKRRKMIFSIFGL.

The segment at residues 5–25 (TPFIAKKLGVSPKAVVRIAQQ) is a DNA-binding region (H-T-H motif). The stretch at 89–151 (SHDFEQLTAQ…LEATLKKEEP (63 aa)) forms a coiled coil.

The protein belongs to the RacA family.

It is found in the cytoplasm. Its function is as follows. Required for the formation of axial filaments and for anchoring the origin regions at the cell poles in sporulating cells, thus ensuring proper chromosome segregation in the prespore. Binds in a dispersed manner throughout the chromosome but preferentially to sites clustered in the origin portion of the chromosome, causing condensation of the chromosome and its remodeling into an elongated, anchored structure. The chain is Chromosome-anchoring protein RacA from Bacillus cereus (strain ATCC 10987 / NRS 248).